A 545-amino-acid polypeptide reads, in one-letter code: Periplasmic trehalase (545 aa).

The signal sequence occupies residues 1–30; sequence MPDRTALPRAMLAAWVLLLLAACSQGPAPT. Residues R160, 167 to 168, N204, 213 to 215, 285 to 287, and G318 contribute to the substrate site; these read WD, RSQ, and RQE. Residues D320 and E503 each act as proton donor/acceptor in the active site. Position 518 (E518) interacts with substrate.

Belongs to the glycosyl hydrolase 37 family.

It localises to the periplasm. It carries out the reaction alpha,alpha-trehalose + H2O = alpha-D-glucose + beta-D-glucose. Provides the cells with the ability to utilize trehalose at high osmolarity by splitting it into glucose molecules that can subsequently be taken up by the phosphotransferase-mediated uptake system. In Pseudomonas aeruginosa (strain ATCC 15692 / DSM 22644 / CIP 104116 / JCM 14847 / LMG 12228 / 1C / PRS 101 / PAO1), this protein is Periplasmic trehalase.